Consider the following 456-residue polypeptide: 26S proteasome non-ATPase regulatory subunit 12 (456 aa).

N-acetylalanine is present on Ala2. Lys92 is covalently cross-linked (Glycyl lysine isopeptide (Lys-Gly) (interchain with G-Cter in SUMO1); alternate). Lys92 participates in a covalent cross-link: Glycyl lysine isopeptide (Lys-Gly) (interchain with G-Cter in SUMO2); alternate. An N6-acetyllysine mark is found at Lys221 and Lys368. Positions 242-420 (SICKHYRAIY…GIINFQRPKD (179 aa)) constitute a PCI domain.

Belongs to the proteasome subunit p55 family. Component of the 19S proteasome regulatory particle complex. The 26S proteasome consists of a 20S core particle (CP) and two 19S regulatory subunits (RP). The regulatory particle is made of a lid composed of 9 subunits including PSMD12, a base containing 6 ATPases and few additional components. Interacts with ERCC6.

In terms of biological role, component of the 26S proteasome, a multiprotein complex involved in the ATP-dependent degradation of ubiquitinated proteins. This complex plays a key role in the maintenance of protein homeostasis by removing misfolded or damaged proteins, which could impair cellular functions, and by removing proteins whose functions are no longer required. Therefore, the proteasome participates in numerous cellular processes, including cell cycle progression, apoptosis, or DNA damage repair. This Bos taurus (Bovine) protein is 26S proteasome non-ATPase regulatory subunit 12 (PSMD12).